A 71-amino-acid chain; its full sequence is Small ribosomal subunit protein bS21 (71 aa).

Belongs to the bacterial ribosomal protein bS21 family.

The chain is Small ribosomal subunit protein bS21 from Alteromonas mediterranea (strain DSM 17117 / CIP 110805 / LMG 28347 / Deep ecotype).